A 394-amino-acid chain; its full sequence is Elongation factor Tu (394 aa).

Residues 10-204 enclose the tr-type G domain; sequence KPHVNVGTIG…ALDNYIPEPE (195 aa). Positions 19–26 are G1; it reads GHVDHGKT. 19-26 provides a ligand contact to GTP; that stretch reads GHVDHGKT. Mg(2+) is bound at residue Thr26. The interval 60–64 is G2; it reads GITIS. A G3 region spans residues 81 to 84; that stretch reads DCPG. Residues 81 to 85 and 136 to 139 contribute to the GTP site; these read DCPGH and NKCD. A G4 region spans residues 136–139; the sequence is NKCD. The segment at 174-176 is G5; sequence SAL.

Belongs to the TRAFAC class translation factor GTPase superfamily. Classic translation factor GTPase family. EF-Tu/EF-1A subfamily. In terms of assembly, monomer.

It localises to the cytoplasm. It carries out the reaction GTP + H2O = GDP + phosphate + H(+). Its function is as follows. GTP hydrolase that promotes the GTP-dependent binding of aminoacyl-tRNA to the A-site of ribosomes during protein biosynthesis. The polypeptide is Elongation factor Tu (Idiomarina loihiensis (strain ATCC BAA-735 / DSM 15497 / L2-TR)).